The chain runs to 347 residues: N-acetyl-gamma-glutamyl-phosphate reductase (347 aa).

The active site involves cysteine 152.

It belongs to the NAGSA dehydrogenase family. Type 1 subfamily.

It localises to the cytoplasm. It catalyses the reaction N-acetyl-L-glutamate 5-semialdehyde + phosphate + NADP(+) = N-acetyl-L-glutamyl 5-phosphate + NADPH + H(+). Its pathway is amino-acid biosynthesis; L-arginine biosynthesis; N(2)-acetyl-L-ornithine from L-glutamate: step 3/4. In terms of biological role, catalyzes the NADPH-dependent reduction of N-acetyl-5-glutamyl phosphate to yield N-acetyl-L-glutamate 5-semialdehyde. The polypeptide is N-acetyl-gamma-glutamyl-phosphate reductase (Neisseria meningitidis serogroup A / serotype 4A (strain DSM 15465 / Z2491)).